We begin with the raw amino-acid sequence, 379 residues long: Copper-containing nitrite reductase (379 aa).

Positions 1-32 (MSEQFRLTRRSMLAGAAVAGALAPVVTSVAHA) form a signal peptide, tat-type signal. 2 Plastocyanin-like domains span residues 33–214 (EGGG…YDKV) and 215–379 (YYVG…PTSG). The Cu cation site is built by His134, His139, His174, Cys175, His184, Met189, and His345.

This sequence belongs to the multicopper oxidase family. In terms of assembly, homotrimer. Requires Cu(2+) as cofactor. Cu(+) serves as cofactor. It depends on FAD as a cofactor. Post-translationally, predicted to be exported by the Tat system. The position of the signal peptide cleavage has not been experimentally proven.

It is found in the periplasm. It catalyses the reaction nitric oxide + Fe(III)-[cytochrome c] + H2O = Fe(II)-[cytochrome c] + nitrite + 2 H(+). Its pathway is nitrogen metabolism; nitrate reduction (denitrification); dinitrogen from nitrate: step 2/4. The chain is Copper-containing nitrite reductase (nirU) from Neorhizobium galegae (Rhizobium galegae).